Here is an 862-residue protein sequence, read N- to C-terminus: Rab GTPase-binding effector protein 1 (862 aa).

Ala2 is subject to N-acetylalanine. Positions Asp11–Arg328 form a coiled coil. At Lys282 the chain carries N6-acetyllysine. 2 disordered regions span residues Glu315–Thr340 and Glu355–Ser374. Residues Ser374, Ser377, and Ser407 each carry the phosphoserine modification. Thr408 bears the Phosphothreonine mark. Ser410 bears the Phosphoserine mark. A coiled-coil region spans residues Asp534–Gln816.

This sequence belongs to the rabaptin family. Heterodimer with RABGEF1. The heterodimer binds RAB4A and RAB5A that have been activated by GTP-binding. Interacts with TSC2. Interacts with GGA1 (via GAE domain), GGA2 (via GAE domain) and GGA3 (via GAE domain). Interacts with AP1G1 (via GAE domain). Interacts with AP1G2 (via GAE domain). Interacts with ECPAS. Interacts with KCNH1. Interacts with PKD1 (via C-terminal domain) and GGA1; the interactions recruit PKD1:PKD2 complex to GGA1 and ARL3 at trans-Golgi network. Interacts with KCNH1. Proteolytic cleavage by caspases in apoptotic cells causes loss of endosome fusion activity.

It is found in the cytoplasm. The protein resides in the early endosome. Its subcellular location is the recycling endosome. The protein localises to the cytoplasmic vesicle. Functionally, rab effector protein acting as linker between gamma-adaptin, RAB4A and RAB5A. Involved in endocytic membrane fusion and membrane trafficking of recycling endosomes. Involved in KCNH1 channels trafficking to and from the cell membrane. Stimulates RABGEF1 mediated nucleotide exchange on RAB5A. Mediates the traffic of PKD1:PKD2 complex from the endoplasmic reticulum through the Golgi to the cilium. This is Rab GTPase-binding effector protein 1 (Rabep1) from Rattus norvegicus (Rat).